The chain runs to 142 residues: Interleukin-3 (142 aa).

Residues 1 to 18 (MSHLPILLLLLLVSPGLQ) form the signal peptide. N-linked (GlcNAc...) asparagine glycans are attached at residues asparagine 33, asparagine 88, and asparagine 108. An intrachain disulfide couples cysteine 34 to cysteine 102.

Belongs to the IL-3 family. As to quaternary structure, monomer. In terms of tissue distribution, activated T-cells, mast cells, natural killer cells.

It is found in the secreted. Functionally, granulocyte/macrophage colony-stimulating factors are cytokines that act in hematopoiesis by controlling the production, differentiation, and function of 2 related white cell populations of the blood, the granulocytes and the monocytes-macrophages. Its function is as follows. This CSF induces granulocytes, macrophages, mast cells, stem cells, erythroid cells, eosinophils and megakaryocytes. The sequence is that of Interleukin-3 (IL3) from Saguinus oedipus (Cotton-top tamarin).